The primary structure comprises 294 residues: Homeobox protein HD1 (294 aa).

One can recognise an ELK domain in the interval 197–217 (ELKLELKQGFKSRIEDVREEI). The segment at residues 218 to 281 (MRKRRAGKLP…NQRKRNWHNN (64 aa)) is a DNA-binding region (homeobox; TALE-type).

The protein belongs to the TALE/KNOX homeobox family. In roots, stems and cotyledons of one-week old seedlings. In mature plants, in young leaves from first level below flowers as well as in flower buds and open flowers.

Its subcellular location is the nucleus. In terms of biological role, possible developmental regulator. The sequence is that of Homeobox protein HD1 (HD1) from Brassica napus (Rape).